The following is a 439-amino-acid chain: Mitochondrial distribution and morphology protein 12 (439 aa).

The region spanning Met1–Ile439 is the SMP-LTD domain. Disordered regions lie at residues Tyr70–Pro103, Gly185–Met274, and Pro354–Gly386. Positions Thr78–Ser91 are enriched in basic and acidic residues. The segment covering Asp215–Thr245 has biased composition (polar residues). Basic and acidic residues-rich tracts occupy residues Arg247 to Asp261 and Ser362 to Ser371.

Belongs to the MDM12 family. In terms of assembly, component of the ER-mitochondria encounter structure (ERMES) or MDM complex, composed of mmm1, mdm10, mdm12 and mdm34. A mmm1 homodimer associates with one molecule of mdm12 on each side in a pairwise head-to-tail manner, and the SMP-LTD domains of mmm1 and mdm12 generate a continuous hydrophobic tunnel for phospholipid trafficking.

The protein resides in the mitochondrion outer membrane. It localises to the endoplasmic reticulum membrane. In terms of biological role, component of the ERMES/MDM complex, which serves as a molecular tether to connect the endoplasmic reticulum (ER) and mitochondria. Components of this complex are involved in the control of mitochondrial shape and protein biogenesis, and function in nonvesicular lipid trafficking between the ER and mitochondria. Mdm12 is required for the interaction of the ER-resident membrane protein mmm1 and the outer mitochondrial membrane-resident beta-barrel protein mdm10. The mdm12-mmm1 subcomplex functions in the major beta-barrel assembly pathway that is responsible for biogenesis of all mitochondrial outer membrane beta-barrel proteins, and acts in a late step after the SAM complex. The mdm10-mdm12-mmm1 subcomplex further acts in the TOM40-specific pathway after the action of the mdm12-mmm1 complex. Essential for establishing and maintaining the structure of mitochondria and maintenance of mtDNA nucleoids. This chain is Mitochondrial distribution and morphology protein 12, found in Aspergillus fumigatus (strain CBS 144.89 / FGSC A1163 / CEA10) (Neosartorya fumigata).